Reading from the N-terminus, the 176-residue chain is Dual specificity phosphatase 28 (176 aa).

Positions 17–159 (PPLVRVAPSL…LQKYEEALQA (143 aa)) constitute a Tyrosine-protein phosphatase domain. Residue Cys103 is the Phosphocysteine intermediate of the active site.

The protein belongs to the protein-tyrosine phosphatase family. Non-receptor class dual specificity subfamily. Monomer.

The enzyme catalyses O-phospho-L-tyrosyl-[protein] + H2O = L-tyrosyl-[protein] + phosphate. The catalysed reaction is O-phospho-L-seryl-[protein] + H2O = L-seryl-[protein] + phosphate. It carries out the reaction O-phospho-L-threonyl-[protein] + H2O = L-threonyl-[protein] + phosphate. In terms of biological role, has phosphatase activity with the synthetic substrate 6,8-difluoro-4-methylumbelliferyl phosphate (in vitro). Has almost no detectable activity with phosphotyrosine, even less activity with phosphothreonine and displays complete lack of activity with phosphoserine. The poor activity with phosphotyrosine may be due to steric hindrance by bulky amino acid sidechains that obstruct access to the active site. The protein is Dual specificity phosphatase 28 (DUSP28) of Homo sapiens (Human).